A 217-amino-acid polypeptide reads, in one-letter code: Small ribosomal subunit protein uS3 (217 aa).

The 70-residue stretch at 24-93 (IKEFLEYKLS…NPQIDVIDVS (70 aa)) folds into the KH type-2 domain.

It belongs to the universal ribosomal protein uS3 family. Part of the 30S ribosomal subunit.

Functionally, binds the lower part of the 30S subunit head. The protein is Small ribosomal subunit protein uS3 of Pyrobaculum islandicum (strain DSM 4184 / JCM 9189 / GEO3).